The chain runs to 358 residues: Homer protein homolog 3 (358 aa).

The required for interaction with NFATC2 stretch occupies residues 1–80; that stretch reads MSTAREQPIF…TKTSQKFGQW (80 aa). Residues 1-113 form the WH1 domain; it reads MSTAREQPIF…EKFQEVKEAA (113 aa). Residues 95–122 adopt a coiled-coil conformation; the sequence is SEQQLTQFAEKFQEVKEAARLAREKSQD. Phosphoserine occurs at positions 120 and 158. Disordered stretches follow at residues 137 to 168 and 239 to 296; these read QVPPSPLVSTNGPEEKLFRSQSADAPGPTERE and AEPV…QVQD. Residues 190-355 adopt a coiled-coil conformation; that stretch reads ALQDSNQRLA…LREGLARLAE (166 aa). Over residues 257-267 the composition is skewed to basic and acidic residues; the sequence is LEARVQTKDQE. Positions 268–277 are enriched in polar residues; that stretch reads IQTLKNQSTG. A compositionally biased stretch (basic and acidic residues) spans 280 to 290; sequence EAPDTAEREET.

This sequence belongs to the Homer family. Tetramer. Encodes coiled-coil structures that mediate homo- and heteromultimerization. Interacts with NFATC2; interaction is calcium independent; interaction competes with PPP3CA for NFATC2 binding; interaction is reduced by AKT activation. Interacts with NFATC1 and NFATC4. Interacts with SHANK1; forms a high-order complex at least composed of SHANK1 and HOMER3; the complex formation is regulated by CAMK2A-mediated phosphorylation.

The protein resides in the cytoplasm. It localises to the postsynaptic density. Its subcellular location is the synapse. Functionally, postsynaptic density scaffolding protein. Binds and cross-links cytoplasmic regions of GRM1, GRM5, ITPR1, DNM3, RYR1, RYR2, SHANK1 and SHANK3. By physically linking GRM1 and GRM5 with ER-associated ITPR1 receptors, it aids the coupling of surface receptors to intracellular calcium release. Negatively regulates T cell activation by inhibiting the calcineurin-NFAT pathway. Acts by competing with calcineurin/PPP3CA for NFAT protein binding, hence preventing NFAT activation by PPP3CA. The sequence is that of Homer protein homolog 3 from Rattus norvegicus (Rat).